A 301-amino-acid polypeptide reads, in one-letter code: Ribosomal RNA small subunit methyltransferase A (301 aa).

Residues asparagine 23, isoleucine 25, glycine 50, glutamate 72, aspartate 97, and asparagine 149 each contribute to the S-adenosyl-L-methionine site.

Belongs to the class I-like SAM-binding methyltransferase superfamily. rRNA adenine N(6)-methyltransferase family. RsmA subfamily.

The protein localises to the cytoplasm. It carries out the reaction adenosine(1518)/adenosine(1519) in 16S rRNA + 4 S-adenosyl-L-methionine = N(6)-dimethyladenosine(1518)/N(6)-dimethyladenosine(1519) in 16S rRNA + 4 S-adenosyl-L-homocysteine + 4 H(+). Specifically dimethylates two adjacent adenosines (A1518 and A1519) in the loop of a conserved hairpin near the 3'-end of 16S rRNA in the 30S particle. May play a critical role in biogenesis of 30S subunits. This is Ribosomal RNA small subunit methyltransferase A from Rickettsia peacockii (strain Rustic).